The sequence spans 490 residues: Cytochrome P450 2C29 (490 aa).

The signal sequence occupies residues 1–25 (MDLVVFLALTLSCLILLSLWRQSSG). N6-acetyllysine occurs at positions 249, 252, and 375. Cysteine 435 serves as a coordination point for heme.

Belongs to the cytochrome P450 family. Heme is required as a cofactor. As to expression, expressed in liver as well as in extrahepatic tissues including brain, kidney, lung, heart, and intestine.

It localises to the endoplasmic reticulum membrane. It is found in the microsome membrane. The catalysed reaction is an organic molecule + reduced [NADPH--hemoprotein reductase] + O2 = an alcohol + oxidized [NADPH--hemoprotein reductase] + H2O + H(+). The enzyme catalyses (5Z,8Z,11Z,14Z)-eicosatetraenoate + reduced [NADPH--hemoprotein reductase] + O2 = 14,15-epoxy-(5Z,8Z,11Z)-eicosatrienoate + oxidized [NADPH--hemoprotein reductase] + H2O + H(+). It functions in the pathway lipid metabolism; arachidonate metabolism. Its function is as follows. A cytochrome P450 monooxygenase that selectively catalyzes the epoxidation of 14,15 double bond of (5Z,8Z,11Z,14Z)-eicosatetraenoic acid (arachidonate) forming 14,15-epoxyeicosatrienoic acid (14,15-EET) regioisomer. Mechanistically, uses molecular oxygen inserting one oxygen atom into a substrate, and reducing the second into a water molecule, with two electrons provided by NADPH via cytochrome P450 reductase (CPR; NADPH--hemoprotein reductase). The chain is Cytochrome P450 2C29 from Mus musculus (Mouse).